The chain runs to 875 residues: Neurotrypsin (875 aa).

The first 20 residues, 1–20, serve as a signal peptide directing secretion; that stretch reads MTLARFVLALMLGALPEVVG. N-linked (GlcNAc...) asparagine glycosylation occurs at asparagine 26. The interval 29–88 is disordered; the sequence is LHHSHRHSPPPGPHYPYYLPTQQRPPRTRPPPPLPRFPRPPRALPAQRPHALQAGHTPRP. Positions 43–53 are enriched in low complexity; sequence YPYYLPTQQRP. The span at 56–71 shows a compositional bias: pro residues; sequence TRPPPPLPRFPRPPRA. In terms of domain architecture, Kringle spans 93–165; the sequence is CPAGEPWVSV…GKVDWGYCDC (73 aa). Disulfide bonds link cysteine 93/cysteine 165, cysteine 109/cysteine 149, cysteine 138/cysteine 163, cysteine 195/cysteine 259, cysteine 208/cysteine 269, cysteine 239/cysteine 249, cysteine 305/cysteine 369, cysteine 318/cysteine 379, cysteine 349/cysteine 359, cysteine 412/cysteine 475, cysteine 425/cysteine 485, cysteine 455/cysteine 465, cysteine 525/cysteine 589, cysteine 538/cysteine 599, cysteine 569/cysteine 579, cysteine 619/cysteine 750, cysteine 661/cysteine 677, cysteine 765/cysteine 831, cysteine 794/cysteine 808, and cysteine 821/cysteine 850. SRCR domains follow at residues 170–271, 280–381, 387–487, and 500–601; these read VRLR…TCSF, IRLA…SCTP, IRLA…ACYP, and VRLV…ICDY. Residues 619 to 630 are zymogen activation region; the sequence is CGLRLLHRRQKR. The Peptidase S1 domain maps to 631 to 874; the sequence is IIGGKNSLRG…FVPWIKSVTK (244 aa). The Charge relay system role is filled by histidine 676. Asparagine 683 is a glycosylation site (N-linked (GlcNAc...) asparagine). Aspartate 726 (charge relay system) is an active-site residue. The active-site Charge relay system is the serine 825.

Belongs to the peptidase S1 family.

It is found in the secreted. Plays a role in neuronal plasticity and the proteolytic action may subserve structural reorganizations associated with learning and memory operations. The sequence is that of Neurotrypsin (PRSS12) from Pan troglodytes (Chimpanzee).